The sequence spans 684 residues: Glycine--tRNA ligase beta subunit (684 aa).

The protein belongs to the class-II aminoacyl-tRNA synthetase family. In terms of assembly, tetramer of two alpha and two beta subunits.

It is found in the cytoplasm. The enzyme catalyses tRNA(Gly) + glycine + ATP = glycyl-tRNA(Gly) + AMP + diphosphate. This Pseudomonas fluorescens (strain SBW25) protein is Glycine--tRNA ligase beta subunit.